We begin with the raw amino-acid sequence, 91 residues long: Insertion element IS1 1 protein InsA (91 aa).

It belongs to the IS1 elements InsA family.

Functionally, absolutely required for transposition of IS1. This is Insertion element IS1 1 protein InsA (insA1) from Escherichia coli (strain K12).